The sequence spans 188 residues: dCTP deaminase (188 aa).

DCTP-binding positions include 111-116 (KSTYAR), 135-137 (TLE), Gln-156, Tyr-170, and Gln-180. Catalysis depends on Glu-137, which acts as the Proton donor/acceptor.

It belongs to the dCTP deaminase family. As to quaternary structure, homotrimer.

It catalyses the reaction dCTP + H2O + H(+) = dUTP + NH4(+). It functions in the pathway pyrimidine metabolism; dUMP biosynthesis; dUMP from dCTP (dUTP route): step 1/2. Its function is as follows. Catalyzes the deamination of dCTP to dUTP. The sequence is that of dCTP deaminase from Pseudomonas savastanoi pv. phaseolicola (strain 1448A / Race 6) (Pseudomonas syringae pv. phaseolicola (strain 1448A / Race 6)).